The sequence spans 832 residues: SID1 transmembrane family member 2 (832 aa).

A signal peptide spans 1–18 (MIAWRLPLCVLLVASVES). Residues 19–293 (HLGALGPKNV…VSQAVTSEAY (275 aa)) lie on the Extracellular side of the membrane. Residues N27, N54, N60, N123, N141, and N165 are each glycosylated (N-linked (GlcNAc...) asparagine). The chain crosses the membrane as a helical span at residues 294–314 (VGGMLFCLGIFLSFYLLTVLL). Topologically, residues 315 to 447 (ACWENWRQRK…DKRVLRKKYQ (133 aa)) are cytoplasmic. Residues S401, S403, and S404 each carry the phosphoserine modification. Residues 448 to 468 (IYFWNIATIAVFYALPVVQLV) form a helical membrane-spanning segment. Topologically, residues 469 to 499 (ITYQTVVNVTGNQDICYYNFLCAHPLGNLSA) are extracellular. N-linked (GlcNAc...) asparagine glycans are attached at residues N476 and N496. A helical membrane pass occupies residues 500 to 520 (FNNILSNLGYILLGLLFLLII). Residues 521-546 (LQREINHNRALLRNDLYALECGIPKH) lie on the Cytoplasmic side of the membrane. Residues 547 to 567 (FGLFYAMGTALMMEGLLSACY) form a helical membrane-spanning segment. Over 568–605 (HVCPNYTNFQFDTSFMYMIAGLCMLKLYQKRHPDINAS) the chain is Extracellular. N-linked (GlcNAc...) asparagine glycosylation is found at N572 and N603. A helical transmembrane segment spans residues 606–626 (AYSAYACLAIVIFFSVLGVVF). Residues 627-631 (GKGNT) are Cytoplasmic-facing. The helical transmembrane segment at 632–652 (AFWIVFSVIHIISTLLLSTQL) threads the bilayer. Residues 653-688 (YYMGRWKLDSGIFRRILHVLYTDCIRQCSGPLYTDR) are Extracellular-facing. The helical transmembrane segment at 689–709 (MVLLVMGNIINWSLAAYGLIM) threads the bilayer. The Cytoplasmic segment spans residues 710–715 (RPNDFA). The chain crosses the membrane as a helical span at residues 716-736 (SYLLAIGICNLLLYFAFYIIM). At 737–746 (KLRSGERIKL) the chain is on the extracellular side. A helical membrane pass occupies residues 747–767 (IPLLCIVCTSVVWGFALFFFF). Residues 768–796 (QGLSTWQKTPAESREHNRDCILLDFFDDH) are Cytoplasmic-facing. A helical membrane pass occupies residues 797-817 (DIWHFLSSIAMFGSFLVLLTL). Topologically, residues 818–832 (DDDLDTVQRDKIYVF) are extracellular.

Belongs to the SID1 family. In terms of assembly, interacts with adapter protein complex 1 (AP-1) and AP-2, but not AP-3 and AP-4. Interacts with LAMP2. Post-translationally, glycosylated. As to expression, widely expressed, including in the liver, brain and kidney (at protein level).

It is found in the lysosome membrane. Its subcellular location is the cell membrane. Its function is as follows. Mediates the translocation of RNA and DNA across the lysosomal membrane during RNA and DNA autophagy (RDA), a process in which RNA and DNA is directly imported into lysosomes in an ATP-dependent manner, and degraded. Involved in the uptake of single-stranded oligonucleotides by living cells, a process called gymnosis. In vitro, mediates the uptake of linear DNA more efficiently than that of circular DNA, but exhibits similar uptake efficacy toward RNA and DNA. Binds long double-stranded RNA (dsRNA) (500 - 700 base pairs), but not dsRNA shorter than 100 bp. The protein is SID1 transmembrane family member 2 (Sidt2) of Mus musculus (Mouse).